The sequence spans 45 residues: Large ribosomal subunit protein bL36 (45 aa).

The segment at 26–45 (VINKKDPNRKQRQKGPARKK) is disordered. The segment covering 35–45 (KQRQKGPARKK) has biased composition (basic residues).

This sequence belongs to the bacterial ribosomal protein bL36 family.

In Protochlamydia amoebophila (strain UWE25), this protein is Large ribosomal subunit protein bL36.